Here is a 773-residue protein sequence, read N- to C-terminus: 5-methyltetrahydropteroyltriglutamate--homocysteine methyltransferase (773 aa).

Residues 16 to 19 (RELK) and K116 each bind 5-methyltetrahydropteroyltri-L-glutamate. L-homocysteine is bound by residues 437-439 (IGS) and E490. L-methionine contacts are provided by residues 437–439 (IGS) and E490. Residues 521 to 522 (RC) and W567 each bind 5-methyltetrahydropteroyltri-L-glutamate. An L-homocysteine-binding site is contributed by D605. D605 provides a ligand contact to L-methionine. E611 contributes to the 5-methyltetrahydropteroyltri-L-glutamate binding site. The Zn(2+) site is built by H647, C649, and E671. Catalysis depends on H700, which acts as the Proton donor. C732 is a Zn(2+) binding site.

It belongs to the vitamin-B12 independent methionine synthase family. Zn(2+) is required as a cofactor.

It carries out the reaction 5-methyltetrahydropteroyltri-L-glutamate + L-homocysteine = tetrahydropteroyltri-L-glutamate + L-methionine. Its pathway is amino-acid biosynthesis; L-methionine biosynthesis via de novo pathway; L-methionine from L-homocysteine (MetE route): step 1/1. Its function is as follows. Catalyzes the transfer of a methyl group from 5-methyltetrahydrofolate to homocysteine resulting in methionine formation. This chain is 5-methyltetrahydropteroyltriglutamate--homocysteine methyltransferase, found in Alkalilimnicola ehrlichii (strain ATCC BAA-1101 / DSM 17681 / MLHE-1).